The following is a 177-amino-acid chain: Mediator of RNA polymerase II transcription subunit 6 (177 aa).

This sequence belongs to the Mediator complex subunit 6 family. As to quaternary structure, component of the Mediator complex.

Its subcellular location is the nucleus. In terms of biological role, component of the Mediator complex, a coactivator involved in the regulated transcription of nearly all RNA polymerase II-dependent genes. Mediator functions as a bridge to convey information from gene-specific regulatory proteins to the basal RNA polymerase II transcription machinery. Mediator is recruited to promoters by direct interactions with regulatory proteins and serves as a scaffold for the assembly of a functional preinitiation complex with RNA polymerase II and the general transcription factors. The chain is Mediator of RNA polymerase II transcription subunit 6 (MED6) from Encephalitozoon cuniculi (strain GB-M1) (Microsporidian parasite).